Reading from the N-terminus, the 956-residue chain is MSTHQGGSVHSIRPFKSSEEYLYAMKEDLAEWLKDMYHLEIIVDNFIEILENGSVLCQHANNVTEVAREFFVQYPHLAEKLQLPKSGVKLNMMAQPGSFLARDNVSNFIQWCRKEMDIKDVIMFETEDLVHRKNEKNFLLCLLELARRASRFGMSAPMLIQMEEQIEEEIRQEMDLPPQEIPVPKPQRKLCDFKNLDQMVQNLVSRCTCPVQFSMVKVSEGKYRVGESSTLIFVRILRKHVMVRVGGGWDTLAHYLDKHDPCHCASLSHKPAIKLGSLQKQVSAVHEVKTQLTPRLDNPSKLETTLILSRSQSPLPPVEWRTYSAERTRTISSSYSLDDNENSPSFKNSQTPPNDRRSMSIGAHERSATLSRKLFTEDTQDPQQLGNPQSGHYRHHHSTSSLASQLTGSEEEYSYISEVFSESQSGRQMGKHTVMNLKEPPKRDAFLSHTQSANRKVISATQQNNIQQGLIIGHQSVTVQDSRPKTPSRFIQPPSPSKQIHFFYNQQNKGVEQNIKTQTNSCTRSSSPVKQTSLTYKQEFNKRPATPSRINYSSSQYKDGDKSAATEIITFHDHVRAKPSVSSEERTIRTGRATPTIHLNRENTNLPLKMQPKPNVTESSHSIERDCMYTPLPIDPEQEKQIYRSLEDEIRTNIKILEGDSEENNPENDTAAHDFNVLGKSTLRLSSSTSKTPRGQEGVPRSGVYINTAWQSGASYDDVITELTKGHVKLNNVDVENWISKIPLKGMVKEAHTSQRNKVRENGHTASLVRKKTLSTEMKGSKQKQLPSQIARQLALENKKKTVENVLEKQVSTVSGDSKEAIPEKIKLSQGLKPKKSLKKPERVPSIYKLKLRPKIRPRRDNRPEKKPSRIPTPVSYRQVPSRNNAKALKRTQSYQANKVSVAQTLNESQISAVNSEDLDSGDEICEHSAPLQAVETPITGENNQSRTEEEEESWV.

Residues Tyr23–Ser150 enclose the Calponin-homology (CH) domain. In terms of domain architecture, GAR spans Cys191–His263. 2 stretches are compositionally biased toward polar residues: residues Ser332–Pro353 and Asp381–Ser390. Disordered stretches follow at residues Ser332–Ile361, Asp378–Leu406, Arg853–Asn885, and Val914–Val956. The span at Arg859–Pro868 shows a compositional bias: basic and acidic residues.

Belongs to the GAS2 family.

The protein resides in the cytoplasm. It is found in the cytoskeleton. Its subcellular location is the cilium basal body. Functionally, together with gas2l2.L, regulates ciliary orientation and performance. In Xenopus laevis (African clawed frog), this protein is GAS2-like protein 2B.